Here is a 228-residue protein sequence, read N- to C-terminus: uncharacterized protein (228 aa).

It belongs to the HAD-like hydrolase superfamily.

Its subcellular location is the cytoplasm. The protein localises to the nucleus. This is an uncharacterized protein from Schizosaccharomyces pombe (strain 972 / ATCC 24843) (Fission yeast).